The primary structure comprises 878 residues: Probable receptor-like protein kinase At4g39110 (878 aa).

Positions 1-43 (MEIRKKPNIFTVLVIDFSSKPSMALLLAILLFLSGPSASAVAA) are cleaved as a signal peptide. At 44-440 (AAVGPATGFK…GRTTGMGKHG (397 aa)) the chain is on the extracellular side. 5 N-linked (GlcNAc...) asparagine glycosylation sites follow: Asn170, Asn183, Asn254, Asn317, and Asn382. The helical transmembrane segment at 441–461 (MVATAGFVMMFGAFIGLGAMV) threads the bilayer. Over 462–878 (YKWKKRPQDW…FTQFANLNGR (417 aa)) the chain is Cytoplasmic. Residues 526–798 (FEASQIIGVG…GDVLWNLEYA (273 aa)) form the Protein kinase domain. Residues 532 to 540 (IGVGGFGNV) and Lys554 contribute to the ATP site. Asp650 serves as the catalytic Proton acceptor. Residues 808–844 (GKAEETENAKPDVVTPGSVPVSDPSPITPSVTTNEAA) form a disordered region.

The protein belongs to the protein kinase superfamily. Ser/Thr protein kinase family.

It is found in the membrane. The chain is Probable receptor-like protein kinase At4g39110 from Arabidopsis thaliana (Mouse-ear cress).